Reading from the N-terminus, the 213-residue chain is ATP phosphoribosyltransferase (213 aa).

Belongs to the ATP phosphoribosyltransferase family. Short subfamily. As to quaternary structure, heteromultimer composed of HisG and HisZ subunits.

The protein localises to the cytoplasm. The catalysed reaction is 1-(5-phospho-beta-D-ribosyl)-ATP + diphosphate = 5-phospho-alpha-D-ribose 1-diphosphate + ATP. It participates in amino-acid biosynthesis; L-histidine biosynthesis; L-histidine from 5-phospho-alpha-D-ribose 1-diphosphate: step 1/9. Its function is as follows. Catalyzes the condensation of ATP and 5-phosphoribose 1-diphosphate to form N'-(5'-phosphoribosyl)-ATP (PR-ATP). Has a crucial role in the pathway because the rate of histidine biosynthesis seems to be controlled primarily by regulation of HisG enzymatic activity. This Anoxybacillus flavithermus (strain DSM 21510 / WK1) protein is ATP phosphoribosyltransferase.